Here is a 266-residue protein sequence, read N- to C-terminus: MKRINALTIAGTDPSGGAGIQADLKTFSALGAYGCSVITALVAQNTRGVQSVYRIEPDFVAAQLDSVFSDVRIDTTKIGMLAETDIVEAVAERLQRYQIQNVVLDTVMLAKSGDPLLSPSAVATLRSRLLPQVSLITPNLPEAAALLDAPHARTEQEMLEQGRSLLAMGCGAVLMKGGHLDDEQSPDWLFTREGEQRFTAPRIMTKNTHGTGCTLSAALAALRPRHTNWADTVQEAKSWLSSALAQADTLEVGHGIGPVHHFHAWW.

Gln-44 serves as a coordination point for 4-amino-5-hydroxymethyl-2-methylpyrimidine.

This sequence belongs to the ThiD family. In terms of assembly, monomer.

The enzyme catalyses 4-amino-5-hydroxymethyl-2-methylpyrimidine + ATP = 4-amino-2-methyl-5-(phosphooxymethyl)pyrimidine + ADP + H(+). The catalysed reaction is 4-amino-2-methyl-5-(phosphooxymethyl)pyrimidine + ATP = 4-amino-2-methyl-5-(diphosphooxymethyl)pyrimidine + ADP. The protein operates within cofactor biosynthesis; thiamine diphosphate biosynthesis; 4-amino-2-methyl-5-diphosphomethylpyrimidine from 5-amino-1-(5-phospho-D-ribosyl)imidazole: step 2/3. It participates in cofactor biosynthesis; thiamine diphosphate biosynthesis; 4-amino-2-methyl-5-diphosphomethylpyrimidine from 5-amino-1-(5-phospho-D-ribosyl)imidazole: step 3/3. Functionally, catalyzes the phosphorylation of hydroxymethylpyrimidine phosphate (HMP-P) to HMP-PP, and of HMP to HMP-P. Shows no activity with pyridoxal, pyridoxamine or pyridoxine. In Escherichia coli (strain K12), this protein is Hydroxymethylpyrimidine/phosphomethylpyrimidine kinase (thiD).